A 240-amino-acid polypeptide reads, in one-letter code: Methylthioribulose-1-phosphate dehydratase (240 aa).

Cys99 is a substrate binding site. Positions 116 and 118 each coordinate Zn(2+). Glu145 acts as the Proton donor/acceptor in catalysis. Residue His201 coordinates Zn(2+).

This sequence belongs to the aldolase class II family. MtnB subfamily. Requires Zn(2+) as cofactor.

The protein resides in the cytoplasm. It carries out the reaction 5-(methylsulfanyl)-D-ribulose 1-phosphate = 5-methylsulfanyl-2,3-dioxopentyl phosphate + H2O. The protein operates within amino-acid biosynthesis; L-methionine biosynthesis via salvage pathway; L-methionine from S-methyl-5-thio-alpha-D-ribose 1-phosphate: step 2/6. In terms of biological role, catalyzes the dehydration of methylthioribulose-1-phosphate (MTRu-1-P) into 2,3-diketo-5-methylthiopentyl-1-phosphate (DK-MTP-1-P). The polypeptide is Methylthioribulose-1-phosphate dehydratase (Paracoccidioides brasiliensis (strain Pb03)).